The sequence spans 152 residues: Deoxyuridine 5'-triphosphate nucleotidohydrolase (152 aa).

Substrate contacts are provided by residues 71-73, N84, 88-90, and M98; these read RSG and LID.

This sequence belongs to the dUTPase family. Requires Mg(2+) as cofactor.

The enzyme catalyses dUTP + H2O = dUMP + diphosphate + H(+). It functions in the pathway pyrimidine metabolism; dUMP biosynthesis; dUMP from dCTP (dUTP route): step 2/2. Its function is as follows. This enzyme is involved in nucleotide metabolism: it produces dUMP, the immediate precursor of thymidine nucleotides and it decreases the intracellular concentration of dUTP so that uracil cannot be incorporated into DNA. In Shewanella baltica (strain OS185), this protein is Deoxyuridine 5'-triphosphate nucleotidohydrolase.